We begin with the raw amino-acid sequence, 101 residues long: NADH-quinone oxidoreductase subunit K (101 aa).

A run of 3 helical transmembrane segments spans residues 4-24, 30-50, and 61-81; these read LAHYLVLGAILFAISIVGIFL, IIILMAIELMLLAVNTNFVAF, and IFVFFVLTVAAAEAAIGLAIL.

Belongs to the complex I subunit 4L family. NDH-1 is composed of 14 different subunits. Subunits NuoA, H, J, K, L, M, N constitute the membrane sector of the complex.

It localises to the cell inner membrane. It carries out the reaction a quinone + NADH + 5 H(+)(in) = a quinol + NAD(+) + 4 H(+)(out). Its function is as follows. NDH-1 shuttles electrons from NADH, via FMN and iron-sulfur (Fe-S) centers, to quinones in the respiratory chain. The immediate electron acceptor for the enzyme in this species is believed to be ubiquinone. Couples the redox reaction to proton translocation (for every two electrons transferred, four hydrogen ions are translocated across the cytoplasmic membrane), and thus conserves the redox energy in a proton gradient. The chain is NADH-quinone oxidoreductase subunit K from Paraburkholderia xenovorans (strain LB400).